Consider the following 493-residue polypeptide: Cytochrome P450 2E1 (493 aa).

Position 298 to 303 (298 to 303 (FAGTET)) interacts with substrate. Cys437 contributes to the heme binding site.

The protein belongs to the cytochrome P450 family. Interacts with chaperones HSP70 and HSP90; this interaction is required for initial targeting to mitochondria. Heme is required as a cofactor.

It localises to the endoplasmic reticulum membrane. The protein localises to the microsome membrane. Its subcellular location is the mitochondrion inner membrane. It carries out the reaction an organic molecule + reduced [NADPH--hemoprotein reductase] + O2 = an alcohol + oxidized [NADPH--hemoprotein reductase] + H2O + H(+). The catalysed reaction is (5Z,8Z,11Z)-eicosatrienoate + reduced [NADPH--hemoprotein reductase] + O2 = 19-hydroxy-(5Z,8Z,11Z)-eicosatrienoate + oxidized [NADPH--hemoprotein reductase] + H2O + H(+). It catalyses the reaction (5Z,8Z,11Z,14Z,17Z)-eicosapentaenoate + reduced [NADPH--hemoprotein reductase] + O2 = 19-hydroxy-(5Z,8Z,11Z,14Z,17Z)-eicosapentaenoate + oxidized [NADPH--hemoprotein reductase] + H2O + H(+). The enzyme catalyses (4Z,7Z,10Z,13Z,16Z,19Z)-docosahexaenoate + reduced [NADPH--hemoprotein reductase] + O2 = 21-hydroxy-(4Z,7Z,10Z,13Z,16Z,19Z)-docosahexaenoate + oxidized [NADPH--hemoprotein reductase] + H2O + H(+). It carries out the reaction dodecanoate + reduced [NADPH--hemoprotein reductase] + O2 = 11-hydroxydodecanoate + oxidized [NADPH--hemoprotein reductase] + H2O + H(+). The catalysed reaction is tetradecanoate + reduced [NADPH--hemoprotein reductase] + O2 = 13-hydroxytetradecanoate + oxidized [NADPH--hemoprotein reductase] + H2O + H(+). It catalyses the reaction 4-nitrophenol + NADPH + O2 + H(+) = 4-nitrocatechol + NADP(+) + H2O. It participates in lipid metabolism; fatty acid metabolism. The omega-1 hydroxylase activity is stimulated by cytochrome b5. In terms of biological role, a cytochrome P450 monooxygenase involved in the metabolism of fatty acids. Mechanistically, uses molecular oxygen inserting one oxygen atom into a substrate, and reducing the second into a water molecule, with two electrons provided by NADPH via cytochrome P450 reductase (NADPH--hemoprotein reductase). Catalyzes the hydroxylation of carbon-hydrogen bonds. Hydroxylates fatty acids specifically at the omega-1 position displaying the highest catalytic activity for saturated fatty acids. May be involved in the oxidative metabolism of xenobiotics. The sequence is that of Cytochrome P450 2E1 (CYP2E1) from Oryctolagus cuniculus (Rabbit).